We begin with the raw amino-acid sequence, 713 residues long: Nucleolin (713 aa).

The segment at 1–309 is disordered; it reads MVKLAKAGKT…QKIEGSEPTT (309 aa). Residues K9, K15, and K16 each carry the N6-acetyllysine modification. A compositionally biased stretch (acidic residues) spans 24–46; it reads VEEDSEDEEMSEDEDDSSGEEEV. A phosphoserine mark is found at S28, S34, S40, and S41. Positions 56 to 111 are enriched in low complexity; it reads ATTTPAKKVVVSQTKKAAVPTPAKKAAVTPGKKAAATPAKKAVTPAKVVPTPGKKG. Residues 58-65 form repeat 1; that stretch reads TTPAKKVV. Positions 58 to 135 are 8 X 8 AA tandem repeats of X-T-P-X-K-K-X-X; the sequence is TTPAKKVVVS…GAVTPAKGAK (78 aa). Position 67 is a phosphoserine (S67). A phosphothreonine mark is found at T69, T76, T84, and T92. 3 repeat units span residues 75-82, 83-90, and 91-98. K96 carries the N6-acetyllysine modification. Phosphothreonine is present on T99. The stretch at 99 to 104 is one 5; truncated repeat; the sequence is TPAKVV. Position 102 is an N6-acetyllysine (K102). Repeat unit 6 spans residues 105–112; the sequence is PTPGKKGA. Position 106 is a phosphothreonine (T106). An N6-acetyllysine mark is found at K109 and K116. 2 consecutive repeat copies span residues 120–127 and 128–135. Phosphothreonine is present on T121. Residue K124 is modified to N6-acetyllysine. S145 and S157 each carry phosphoserine. Residues 145–168 show a composition bias toward acidic residues; that stretch reads SDEDEDEEDEDDSDEDEDEEDEFE. Residues 169 to 186 show a composition bias toward low complexity; the sequence is PPVVKGVKPAKAAPAAPA. S187 and S213 each carry phosphoserine. Positions 187–218 are enriched in acidic residues; sequence SEDEDEEDDDDEDDDDDDEEEEEEDDSEEEVM. The residue at position 221 (T221) is a Phosphothreonine. A compositionally biased stretch (acidic residues) spans 242–275; that stretch reads EEEEDDEDDEDEEEDEDEEDEEDDEDEDEEEEEE. The span at 288 to 304 shows a compositional bias: basic and acidic residues; the sequence is MTKQKEAPEAKKQKIEG. K301 participates in a covalent cross-link: Glycyl lysine isopeptide (Lys-Gly) (interchain with G-Cter in SUMO1); alternate. K301 participates in a covalent cross-link: Glycyl lysine isopeptide (Lys-Gly) (interchain with G-Cter in SUMO2); alternate. S305 carries the post-translational modification Phosphoserine. RRM domains lie at 311-387 and 397-470; these read FNLF…KPKG and RTLL…YTGE. K322 carries the post-translational modification N6-acetyllysine. A Glycyl lysine isopeptide (Lys-Gly) (interchain with G-Cter in SUMO1); alternate cross-link involves residue K328. K328 participates in a covalent cross-link: Glycyl lysine isopeptide (Lys-Gly) (interchain with G-Cter in SUMO2); alternate. Position 352 is an N6-acetyllysine (K352). S360 bears the Phosphoserine mark. T371 is modified (phosphothreonine). K374 is covalently cross-linked (Glycyl lysine isopeptide (Lys-Gly) (interchain with G-Cter in SUMO2)). Residue K381 forms a Glycyl lysine isopeptide (Lys-Gly) (interchain with G-Cter in SUMO2); alternate linkage. Residue K381 is modified to N6-acetyllysine; alternate. K402 carries the N6-acetyllysine modification. S405 is modified (phosphoserine). T409 is subject to Phosphothreonine. Position 448 is an N6-acetyllysine (K448). Phosphoserine occurs at positions 462 and 464. N6-acetyllysine is present on residues K471 and K480. Residues 489–563 form the RRM 3 domain; the sequence is KTLVLSNLSY…RTIRLELQGP (75 aa). K516 is covalently cross-linked (Glycyl lysine isopeptide (Lys-Gly) (interchain with G-Cter in SUMO2); alternate). K516 is subject to N6-acetyllysine; alternate. The residue at position 524 (K524) is an N6-acetyllysine. Phosphoserine is present on S566. An N6-acetyllysine modification is found at K575. The region spanning 575-650 is the RRM 4 domain; the sequence is KTLFVKGLSE…NKVTLDWAKP (76 aa). A Glycyl lysine isopeptide (Lys-Gly) (interchain with G-Cter in SUMO2); alternate cross-link involves residue K580. N6-acetyllysine; alternate is present on K580. S583 is modified (phosphoserine). A Glycyl lysine isopeptide (Lys-Gly) (interchain with G-Cter in SUMO1); alternate cross-link involves residue K592. K592 participates in a covalent cross-link: Glycyl lysine isopeptide (Lys-Gly) (interchain with G-Cter in SUMO2); alternate. Residues S594 and S622 each carry the phosphoserine modification. Residue K627 forms a Glycyl lysine isopeptide (Lys-Gly) (interchain with G-Cter in SUMO2) linkage. A disordered region spans residues 645–713; sequence LDWAKPKGEG…KPQGKKTKFE (69 aa). K649 carries the N6-acetyllysine modification. A compositionally biased stretch (gly residues) spans 653 to 702; it reads EGGFGGRGGGRGGFGGRGGGRGGRGGFGGRGRGGFGGRGGFRGGRGGGGD. Residues R659, R663, R669, R673, R676, R682, R684, R690, and R694 each carry the asymmetric dimethylarginine modification. An Asymmetric dimethylarginine; alternate modification is found at R697. Residue R697 is modified to Omega-N-methylarginine; alternate.

Identified in a IGF2BP1-dependent mRNP granule complex containing untranslated mRNAs. Component of the SWAP complex that consists of NPM1, NCL/nucleolin, PARP1 and SWAP70. Component of a complex which is at least composed of HTATSF1/Tat-SF1, the P-TEFb complex components CDK9 and CCNT1, RNA polymerase II, SUPT5H, and NCL/nucleolin. Interacts with AICDA. Interacts with APTX. Interacts with C1QBP. Interacts with ERBB4. Interacts (via C-terminus) with FMR1 isoform 6 (via N-terminus). Interacts with GZF1; this interaction is important for nucleolar localization of GZF1. Interacts with NSUN2. Interacts with NVL. Interacts (via N-terminus domain) with SETX. Interacts (via RRM1 and C-terminal RRM4/Arg/Gly-rich domains) with TERT; the interaction is important for nucleolar localization of TERT. Interacts with WDR46. Interacts with ZFP36. Interacts with LRRC34. Interacts with RRP1B. Interacts with HNRNPU; this interaction occurs during mitosis. Interacts with RIOK1; RIOK1 recruits NCL to PRMT5 for symmetrically methylation. Interacts with ZBTB7B. Interacts with MDK; this interaction promotes NCL clustering and lateral movements of this complex into lipid rafts leading to MDK internalization. Interacts with HDGF. Interacts with ALKBH2. Interacts with IGFBP5; this interaction is necessary for IGFBP5 localization to the nucleus. Interacts with DDX24 (when ubiquitinated); this interaction may be important during ribosome biogenesis. Post-translationally, some glutamate residues are glycylated by TTLL8. This modification occurs exclusively on glutamate residues and results in a glycine chain on the gamma-carboxyl group. Symmetrically methylated by PRMT5.

The protein resides in the nucleus. It localises to the nucleolus. It is found in the cytoplasm. Its function is as follows. Nucleolin is the major nucleolar protein of growing eukaryotic cells. It is found associated with intranucleolar chromatin and pre-ribosomal particles. It induces chromatin decondensation by binding to histone H1. It is thought to play a role in pre-rRNA transcription and ribosome assembly. May play a role in the process of transcriptional elongation. Binds RNA oligonucleotides with 5'-UUAGGG-3' repeats more tightly than the telomeric single-stranded DNA 5'-TTAGGG-3' repeats. The chain is Nucleolin (Ncl) from Rattus norvegicus (Rat).